Consider the following 214-residue polypeptide: Outer-membrane lipoprotein LolB (214 aa).

The first 25 residues, 1–25, serve as a signal peptide directing secretion; sequence MNNLKRFTKSIFSCIALSGLLFLGG. The N-palmitoyl cysteine moiety is linked to residue cysteine 26. The S-diacylglycerol cysteine moiety is linked to residue cysteine 26.

This sequence belongs to the LolB family. As to quaternary structure, monomer.

The protein localises to the cell outer membrane. Functionally, plays a critical role in the incorporation of lipoproteins in the outer membrane after they are released by the LolA protein. This chain is Outer-membrane lipoprotein LolB, found in Shewanella sp. (strain MR-7).